We begin with the raw amino-acid sequence, 193 residues long: Chlorate reductase assembly chaperone protein (193 aa).

The protein belongs to the type II DMSO reductase enzyme chaperone family.

It localises to the cytoplasm. In terms of biological role, may function as a system-specific chaperone protein essential for the assembly of an active chlorate reductase ClrABC. The chain is Chlorate reductase assembly chaperone protein (clrD) from Ideonella dechloratans.